A 66-amino-acid polypeptide reads, in one-letter code: Toxin Boma6b (66 aa).

The 63-residue stretch at 2 to 64 folds into the LCN-type CS-alpha/beta domain; it reads RDAYIAQNYN…VPIKVEGKCH (63 aa). 4 cysteine pairs are disulfide-bonded: cysteine 12–cysteine 63, cysteine 16–cysteine 36, cysteine 22–cysteine 46, and cysteine 26–cysteine 48.

The protein belongs to the long (4 C-C) scorpion toxin superfamily. Sodium channel inhibitor family. Alpha subfamily. As to expression, expressed by the venom gland.

It is found in the secreted. Alpha toxins bind voltage-independently at site-3 of sodium channels (Nav) and inhibit the inactivation of the activated channels, thereby blocking neuronal transmission. In Buthus occitanus mardochei (Moroccan scorpion), this protein is Toxin Boma6b.